Here is a 51-residue protein sequence, read N- to C-terminus: Large ribosomal subunit protein bL33 (51 aa).

A disordered region spans residues 1–21; sequence MRDKIKLESSAGTGHFYTTTK. The span at 10-20 shows a compositional bias: polar residues; it reads SAGTGHFYTTT.

The protein belongs to the bacterial ribosomal protein bL33 family.

This is Large ribosomal subunit protein bL33 (rpmG) from Neisseria meningitidis serogroup A / serotype 4A (strain DSM 15465 / Z2491).